We begin with the raw amino-acid sequence, 322 residues long: Cytochrome c biogenesis protein CcsA (322 aa).

7 helical membrane-spanning segments follow: residues 9–29, 44–64, 68–88, 143–163, 226–246, 260–274, and 289–309; these read ILTH…LITL, GMIV…VSSG, LSNL…LHTI, MLLS…ILII, IISL…VWAN, TWAF…IYLH, and IASI…LLGI.

Belongs to the CcmF/CycK/Ccl1/NrfE/CcsA family. May interact with Ccs1.

It is found in the plastid. It localises to the chloroplast thylakoid membrane. Its function is as follows. Required during biogenesis of c-type cytochromes (cytochrome c6 and cytochrome f) at the step of heme attachment. The sequence is that of Cytochrome c biogenesis protein CcsA from Hordeum vulgare (Barley).